Reading from the N-terminus, the 144-residue chain is Large ribosomal subunit protein uL13 (144 aa).

Belongs to the universal ribosomal protein uL13 family. Part of the 50S ribosomal subunit.

This protein is one of the early assembly proteins of the 50S ribosomal subunit, although it is not seen to bind rRNA by itself. It is important during the early stages of 50S assembly. This chain is Large ribosomal subunit protein uL13, found in Heliobacterium modesticaldum (strain ATCC 51547 / Ice1).